Consider the following 631-residue polypeptide: Mu-like prophage FluMu protein gp42 (631 aa).

A run of 2 helical transmembrane segments spans residues 56-76 and 385-405; these read LGNI…TMVG and GLAD…PVYV. The segment at 425-453 is disordered; sequence IEDGRDKDKKTQKKNKPPRPKRGRGSVRS. Basic residues predominate over residues 434–449; sequence KTQKKNKPPRPKRGRG. The next 3 helical transmembrane spans lie at 455–475, 495–515, and 543–563; these read VAAV…VTTA, SKAV…TVLM, and ALIP…GWLG.

This sequence to phage Mu protein gp42.

The protein localises to the cell membrane. The polypeptide is Mu-like prophage FluMu protein gp42 (Haemophilus influenzae (strain ATCC 51907 / DSM 11121 / KW20 / Rd)).